Here is a 107-residue protein sequence, read N- to C-terminus: Nucleoid-associated protein RT0857 (107 aa).

The protein belongs to the YbaB/EbfC family. Homodimer.

It is found in the cytoplasm. It localises to the nucleoid. In terms of biological role, binds to DNA and alters its conformation. May be involved in regulation of gene expression, nucleoid organization and DNA protection. The chain is Nucleoid-associated protein RT0857 from Rickettsia typhi (strain ATCC VR-144 / Wilmington).